The chain runs to 390 residues: Flap endonuclease 1 (390 aa).

Residues 1 to 111 form an N-domain region; sequence MGIKGLAKLL…GELLKRREKR (111 aa). Residue Asp-34 participates in Mg(2+) binding. Residues Arg-47 and Arg-77 each contribute to the DNA site. Asp-93, Glu-165, Glu-167, Asp-186, and Asp-188 together coordinate Mg(2+). Residues 129–260 are I-domain; that stretch reads EQDKQSKRLV…KTALKLIREH (132 aa). Glu-165 is a DNA binding site. DNA contacts are provided by Gly-238 and Asp-240. Asp-240 contacts Mg(2+). The segment at 342–390 is disordered; it reads KPQSRMDSFFKVKANPEGDKKKAEKRKAELAASRGKGKKGKGGGGFKKK. Residues 343 to 351 form an interaction with PCNA region; sequence PQSRMDSFF. A compositionally biased stretch (basic and acidic residues) spans 349–370; that stretch reads SFFKVKANPEGDKKKAEKRKAE. Positions 376-390 are enriched in basic residues; it reads GKGKKGKGGGGFKKK.

It belongs to the XPG/RAD2 endonuclease family. FEN1 subfamily. In terms of assembly, interacts with PCNA. Three molecules of FEN1 bind to one PCNA trimer with each molecule binding to one PCNA monomer. PCNA stimulates the nuclease activity without altering cleavage specificity. Mg(2+) serves as cofactor. Post-translationally, phosphorylated. Phosphorylation upon DNA damage induces relocalization to the nuclear plasma.

The protein resides in the nucleus. The protein localises to the nucleolus. Its subcellular location is the nucleoplasm. It localises to the mitochondrion. In terms of biological role, structure-specific nuclease with 5'-flap endonuclease and 5'-3' exonuclease activities involved in DNA replication and repair. During DNA replication, cleaves the 5'-overhanging flap structure that is generated by displacement synthesis when DNA polymerase encounters the 5'-end of a downstream Okazaki fragment. It enters the flap from the 5'-end and then tracks to cleave the flap base, leaving a nick for ligation. Also involved in the long patch base excision repair (LP-BER) pathway, by cleaving within the apurinic/apyrimidinic (AP) site-terminated flap. Acts as a genome stabilization factor that prevents flaps from equilibrating into structures that lead to duplications and deletions. Also possesses 5'-3' exonuclease activity on nicked or gapped double-stranded DNA, and exhibits RNase H activity. Also involved in replication and repair of rDNA and in repairing mitochondrial DNA. In Thalassiosira pseudonana (Marine diatom), this protein is Flap endonuclease 1.